The sequence spans 513 residues: ATP synthase subunit alpha (513 aa).

ATP is bound at residue 169 to 176; it reads GDRQTGKT.

The protein belongs to the ATPase alpha/beta chains family. As to quaternary structure, F-type ATPases have 2 components, CF(1) - the catalytic core - and CF(0) - the membrane proton channel. CF(1) has five subunits: alpha(3), beta(3), gamma(1), delta(1), epsilon(1). CF(0) has three main subunits: a(1), b(2) and c(9-12). The alpha and beta chains form an alternating ring which encloses part of the gamma chain. CF(1) is attached to CF(0) by a central stalk formed by the gamma and epsilon chains, while a peripheral stalk is formed by the delta and b chains.

It localises to the cell inner membrane. It carries out the reaction ATP + H2O + 4 H(+)(in) = ADP + phosphate + 5 H(+)(out). Produces ATP from ADP in the presence of a proton gradient across the membrane. The alpha chain is a regulatory subunit. This is ATP synthase subunit alpha from Klebsiella pneumoniae subsp. pneumoniae (strain ATCC 700721 / MGH 78578).